Here is a 435-residue protein sequence, read N- to C-terminus: Adenylosuccinate synthetase (435 aa).

GTP is bound by residues 17-23 (GDEGKGK) and 45-47 (GHT). Aspartate 18 acts as the Proton acceptor in catalysis. The Mg(2+) site is built by aspartate 18 and glycine 45. Residues 18–21 (DEGK), 43–46 (NAGH), threonine 135, arginine 149, glutamine 230, threonine 245, and arginine 309 each bind IMP. Catalysis depends on histidine 46, which acts as the Proton donor. 305–311 (TVSGRAR) is a substrate binding site. GTP-binding positions include arginine 311, 337–339 (LLD), and 419–421 (SVG).

Belongs to the adenylosuccinate synthetase family. Homodimer. Requires Mg(2+) as cofactor.

The protein localises to the cytoplasm. The enzyme catalyses IMP + L-aspartate + GTP = N(6)-(1,2-dicarboxyethyl)-AMP + GDP + phosphate + 2 H(+). Its pathway is purine metabolism; AMP biosynthesis via de novo pathway; AMP from IMP: step 1/2. Its function is as follows. Plays an important role in the de novo pathway of purine nucleotide biosynthesis. Catalyzes the first committed step in the biosynthesis of AMP from IMP. This is Adenylosuccinate synthetase from Spiroplasma citri.